The chain runs to 193 residues: DNA damage-inducible transcript 4-like protein (193 aa).

This sequence belongs to the DDIT4 family. Expressed in heart, skeletal muscle and testis.

Its subcellular location is the cytoplasm. In terms of biological role, inhibits cell growth by regulating the TOR signaling pathway upstream of the TSC1-TSC2 complex and downstream of AKT1. This chain is DNA damage-inducible transcript 4-like protein (Ddit4l), found in Rattus norvegicus (Rat).